The sequence spans 307 residues: Aspartate carbamoyltransferase catalytic subunit (307 aa).

2 residues coordinate carbamoyl phosphate: R54 and T55. K83 provides a ligand contact to L-aspartate. The carbamoyl phosphate site is built by R104, H132, and Q135. L-aspartate-binding residues include R165 and R228. Positions 267 and 268 each coordinate carbamoyl phosphate.

The protein belongs to the aspartate/ornithine carbamoyltransferase superfamily. ATCase family. Heterododecamer (2C3:3R2) of six catalytic PyrB chains organized as two trimers (C3), and six regulatory PyrI chains organized as three dimers (R2).

It carries out the reaction carbamoyl phosphate + L-aspartate = N-carbamoyl-L-aspartate + phosphate + H(+). It functions in the pathway pyrimidine metabolism; UMP biosynthesis via de novo pathway; (S)-dihydroorotate from bicarbonate: step 2/3. In terms of biological role, catalyzes the condensation of carbamoyl phosphate and aspartate to form carbamoyl aspartate and inorganic phosphate, the committed step in the de novo pyrimidine nucleotide biosynthesis pathway. In Clostridium perfringens (strain SM101 / Type A), this protein is Aspartate carbamoyltransferase catalytic subunit.